The chain runs to 119 residues: RIIa domain-containing protein 1 (119 aa).

The 35-residue stretch at 70–104 (KEVSLLISGFFREMFLKRPDNILEFAAHYFTDPRL) folds into the RIIa domain.

Abundant in tissues rich in highly ciliated cells, such as testis, trachea and olfactory epithelium.

This chain is RIIa domain-containing protein 1 (Riiad1), found in Mus musculus (Mouse).